A 190-amino-acid polypeptide reads, in one-letter code: Ohanin (190 aa).

Residues methionine 1–alanine 20 form the signal peptide. The region spanning serine 21–leucine 127 is the B30.2/SPRY domain. Positions arginine 128–leucine 190 are excised as a propeptide.

Expressed by the venom gland.

The protein localises to the secreted. Its function is as follows. Neurotoxin that produces dose-dependent hypolocomotion and hyperalgesia in mice. May directly act on the central nervous system, as it is 6500-fold more potent when administered intracerebroventricularly than intraperitoneal. This is Ohanin from Ophiophagus hannah (King cobra).